A 69-amino-acid polypeptide reads, in one-letter code: Putative membrane protein insertion efficiency factor (69 aa).

This sequence belongs to the UPF0161 family.

The protein resides in the cell inner membrane. Functionally, could be involved in insertion of integral membrane proteins into the membrane. The protein is Putative membrane protein insertion efficiency factor of Azoarcus sp. (strain BH72).